We begin with the raw amino-acid sequence, 411 residues long: MSVGCACPGCSSKSFKLYSPKEPPNGNAFPPFHPGTMLDRDVGPTPMYPPTYLEPGIGRHTPYGNQTDYRIFELNKRLQNWTEECDNLWWDAFTTEFFEDDAMLTITFCLEDGPKRYTIGRTLIPRYFRSIFEGGATELYYVLKHPKESFHNNFVSLDCDQCTMVTQHGKPMFTQVCVEGRLYLEFMFDDMMRIKTWHFSIRQHRELIPRSILAMHAQDPQMLDQLSKNITRCGLSNSTLNYLRLCVILEPMQELMSRHKTYSLSPRDCLKTCLFQKWQRMVAPPAEPARQQPSKRRKRKMSGGSTMSSGGGNTNNSNSKKKSPASTFALSSQVPDVMVVGEPTLMGGEFGDEDERLITRLENTQFDAANGIDDEDSFNNSPALGANSPWNSKPPSSQESKSENPTSQASQ.

Disordered regions lie at residues 284–330 (PPAE…TFAL) and 367–411 (DAAN…QASQ). A compositionally biased stretch (low complexity) spans 302-318 (SGGSTMSSGGGNTNNSN). Residues 336 to 375 (DVMVVGEPTLMGGEFGDEDERLITRLENTQFDAANGIDDE) enclose the LIM interaction domain (LID) domain.

Belongs to the LDB family. In terms of assembly, forms homodimers and heterodimers. As to expression, first expressed at stages 15-16 in presumptive limb mesoderm. As limb outgrowth proceeds, expressed in the entire limb bud, concentrating in the distal mesoderm throughout limb development. Both hindlimbs and forelimbs exhibit similar expression patterns.

The protein resides in the nucleus. Binds to the LIM domain of a wide variety of LIM domain-containing transcription factors. This Gallus gallus (Chicken) protein is LIM domain-binding protein 1.